Consider the following 162-residue polypeptide: Ribosome-binding factor A (162 aa).

Residues 123–162 (VARVAAGASPAGDPDPYKEPRVEDADDAEVDEPSRSRQAD) form a disordered region. Positions 125-136 (RVAAGASPAGDP) are enriched in low complexity.

This sequence belongs to the RbfA family. As to quaternary structure, monomer. Binds 30S ribosomal subunits, but not 50S ribosomal subunits or 70S ribosomes.

It is found in the cytoplasm. Its function is as follows. One of several proteins that assist in the late maturation steps of the functional core of the 30S ribosomal subunit. Associates with free 30S ribosomal subunits (but not with 30S subunits that are part of 70S ribosomes or polysomes). Required for efficient processing of 16S rRNA. May interact with the 5'-terminal helix region of 16S rRNA. The chain is Ribosome-binding factor A from Rhodococcus opacus (strain B4).